Consider the following 354-residue polypeptide: DNA polymerase IV (354 aa).

The UmuC domain occupies 8-189 (IIHIDMDCFY…LPLQKIPGVG (182 aa)). Aspartate 12 and aspartate 107 together coordinate Mg(2+). Residue glutamate 108 is part of the active site.

It belongs to the DNA polymerase type-Y family. In terms of assembly, monomer. Requires Mg(2+) as cofactor.

Its subcellular location is the cytoplasm. The enzyme catalyses DNA(n) + a 2'-deoxyribonucleoside 5'-triphosphate = DNA(n+1) + diphosphate. Poorly processive, error-prone DNA polymerase involved in untargeted mutagenesis. Copies undamaged DNA at stalled replication forks, which arise in vivo from mismatched or misaligned primer ends. These misaligned primers can be extended by PolIV. Exhibits no 3'-5' exonuclease (proofreading) activity. May be involved in translesional synthesis, in conjunction with the beta clamp from PolIII. The chain is DNA polymerase IV from Vibrio vulnificus (strain CMCP6).